The chain runs to 98 residues: MNLYDVIKKPVITEGSMAQYEAGKYVFEVDTRAHKLLIKQAVEAAFEGVKVANVNTINVKPKAKRVGRYTGFTNKTKKAIVTLTADSKAIELFGAEEE.

This sequence belongs to the universal ribosomal protein uL23 family. In terms of assembly, part of the 50S ribosomal subunit. Contacts protein L29, and trigger factor when it is bound to the ribosome.

In terms of biological role, one of the early assembly proteins it binds 23S rRNA. One of the proteins that surrounds the polypeptide exit tunnel on the outside of the ribosome. Forms the main docking site for trigger factor binding to the ribosome. The sequence is that of Large ribosomal subunit protein uL23 from Streptococcus sanguinis (strain SK36).